Consider the following 91-residue polypeptide: Lactococcin-B immunity protein (91 aa).

Its function is as follows. Imparts immunity to lactococcin-B to naturally sensitive host strains. This Lactococcus lactis subsp. cremoris (Streptococcus cremoris) protein is Lactococcin-B immunity protein (lciB).